The sequence spans 200 residues: MINRTILVGRLTRDPELRYTNGGAAVATFTIAVNRQFTNQNGEREADFISCVIWRKAAENFANFTHKGSLVGIDGRIQTRNYENQQGVRVYVTEVVVENFSLLESRAESERHQAANGGSGNNNYNNGNSNYNNNNNGYSNQGQNAAPQQSSANNNNPFGNGNTGNASSAAPSSSANNNNQADPFANNGDQIDISDDDLPF.

The SSB domain maps to 1–104 (MINRTILVGR…VVVENFSLLE (104 aa)). A disordered region spans residues 108–200 (ESERHQAANG…IDISDDDLPF (93 aa)). The segment covering 121-187 (NNNYNNGNSN…NNQADPFANN (67 aa)) has biased composition (low complexity). The Important for interaction with partner proteins signature appears at 195–200 (DDDLPF).

Homotetramer.

Its function is as follows. Plays an important role in DNA replication, recombination and repair. Binds to ssDNA and to an array of partner proteins to recruit them to their sites of action during DNA metabolism. In Lactiplantibacillus plantarum (strain ATCC BAA-793 / NCIMB 8826 / WCFS1) (Lactobacillus plantarum), this protein is Single-stranded DNA-binding protein (ssb).